A 112-amino-acid polypeptide reads, in one-letter code: MFKILLVCALAALVAANENAEVKELVNEVNPDGFKTVVSLSDGSASQASGDVHGNIDGVFEWVSPEGVHVRVAYKADENGYQPSSDLLPVAPPIPEAILKSLAWIEAHPSKE.

The N-terminal stretch at 1–16 (MFKILLVCALAALVAA) is a signal peptide. Residues 31 to 92 (PDGFKTVVSL…PSSDLLPVAP (62 aa)) form the Chitin-binding type R&amp;R domain.

In terms of biological role, component of the larval cuticle. This is Larval cuticle protein III/IV (Lcp3) from Drosophila miranda (Fruit fly).